Here is a 371-residue protein sequence, read N- to C-terminus: Putative HAD-like hydrolase Noc_2718 (371 aa).

The tract at residues 1-288 (MKQKILLCSD…TGREESAEEE (288 aa)) is HAD-like hydrolase. In terms of domain architecture, YcgL spans 291 to 371 (QSCAIYRSCK…QLSSREYRRS (81 aa)).

The protein in the N-terminal section; belongs to the HAD-like hydrolase superfamily.

The sequence is that of Putative HAD-like hydrolase Noc_2718 from Nitrosococcus oceani (strain ATCC 19707 / BCRC 17464 / JCM 30415 / NCIMB 11848 / C-107).